Reading from the N-terminus, the 558-residue chain is INCREASED PETAL GROWTH ANISOTROPY 1-like protein 2 (558 aa).

The segment covering 1–15 (MSRISTTSTTPSRVR) has biased composition (low complexity). The tract at residues 1-54 (MSRISTTSTTPSRVRAANSHYSVISKPRAQDDNGLTGGKPKSSGYDVKNDPAKR) is disordered. Residues 104–180 (VMATAAAEDE…EAKISSLSSN (77 aa)) are a coiled coil. The segment at 207-285 (KVKKEVAVES…AARAQKSPPV (79 aa)) is disordered. Pro residues-rich tracts occupy residues 221-236 (PPSP…PPLP) and 256-272 (FAPP…PPRP). The stretch at 392–448 (KADTLQEAAVEYRELKKLEKELSSYSDDPNIHYGVALKKMANLLDKSEQRIRRLVRL) forms a coiled coil.

Belongs to the IPGA1 family.

It localises to the cytoplasm. Its subcellular location is the cytoskeleton. In terms of biological role, microtubule-associated protein probably involved in the regulation of microtubule organization. In Arabidopsis thaliana (Mouse-ear cress), this protein is INCREASED PETAL GROWTH ANISOTROPY 1-like protein 2.